The sequence spans 49 residues: Large ribosomal subunit protein bL33B (49 aa).

Belongs to the bacterial ribosomal protein bL33 family.

This is Large ribosomal subunit protein bL33B from Lactobacillus delbrueckii subsp. bulgaricus (strain ATCC BAA-365 / Lb-18).